A 185-amino-acid chain; its full sequence is Ribosome-recycling factor (185 aa).

The protein belongs to the RRF family.

The protein resides in the cytoplasm. In terms of biological role, responsible for the release of ribosomes from messenger RNA at the termination of protein biosynthesis. May increase the efficiency of translation by recycling ribosomes from one round of translation to another. The chain is Ribosome-recycling factor from Enterococcus faecalis (strain ATCC 700802 / V583).